A 915-amino-acid polypeptide reads, in one-letter code: Protein translocase subunit SecA (915 aa).

ATP contacts are provided by residues glutamine 87, 105-109 (GEGKT), and aspartate 512. Positions 881–915 (LPGTAPVRPEPKIGRNEPCPCGSGKKYKHCHGQLN) are disordered. 4 residues coordinate Zn(2+): cysteine 899, cysteine 901, cysteine 910, and histidine 911. A compositionally biased stretch (basic residues) spans 905–915 (KKYKHCHGQLN).

It belongs to the SecA family. Monomer and homodimer. Part of the essential Sec protein translocation apparatus which comprises SecA, SecYEG and auxiliary proteins SecDF-YajC and YidC. It depends on Zn(2+) as a cofactor.

The protein localises to the cell inner membrane. It is found in the cytoplasm. It carries out the reaction ATP + H2O + cellular proteinSide 1 = ADP + phosphate + cellular proteinSide 2.. Its function is as follows. Part of the Sec protein translocase complex. Interacts with the SecYEG preprotein conducting channel. Has a central role in coupling the hydrolysis of ATP to the transfer of proteins into and across the cell membrane, serving both as a receptor for the preprotein-SecB complex and as an ATP-driven molecular motor driving the stepwise translocation of polypeptide chains across the membrane. The polypeptide is Protein translocase subunit SecA (Azotobacter vinelandii (strain DJ / ATCC BAA-1303)).